A 166-amino-acid chain; its full sequence is Protein FAM89A (166 aa).

It belongs to the FAM89 family.

This chain is Protein FAM89A (fam89a), found in Xenopus laevis (African clawed frog).